A 294-amino-acid polypeptide reads, in one-letter code: MQARFHTSWAELPASLQFALEPILSAENFPAMLTAEQVKTVKNISGLDDDALAFALLPLATACALTPISHFNVGAIARGKSGNFYFGANMEFRGVPLQQTIHAEQCAVTHAWLRGETNLVAITVNYTPCGHCRQFMNELNCGSELHIHLPGRPPSTLGQYLPDSFGPTDLAITTLLMDPVNHGYTLAETDPLTQAALNAANHSHAPYSQSHSGVALETTNGKIYAGRYAENAAFNPSLPPLQAALILANITGENCASIRRAVLVEGHNAVTSQWDTTLATLNALGCSAVKRVTF.

CMP/dCMP-type deaminase domains are found at residues D48–T168 and A187–F294. N89 to E91 serves as a coordination point for substrate. Residue H102 coordinates Zn(2+). The Proton donor role is filled by E104. C129 and C132 together coordinate Zn(2+).

This sequence belongs to the cytidine and deoxycytidylate deaminase family. In terms of assembly, homodimer. It depends on Zn(2+) as a cofactor.

It carries out the reaction cytidine + H2O + H(+) = uridine + NH4(+). The enzyme catalyses 2'-deoxycytidine + H2O + H(+) = 2'-deoxyuridine + NH4(+). This enzyme scavenges exogenous and endogenous cytidine and 2'-deoxycytidine for UMP synthesis. This chain is Cytidine deaminase, found in Yersinia pseudotuberculosis serotype IB (strain PB1/+).